An 863-amino-acid chain; its full sequence is Paramyosin (863 aa).

A nonhelical region region spans residues 1-26 (MSESHVKISRTIIRGTSPSTVRLESP). The stretch at 27–836 (VRELEDLLDL…ERTITIKRTI (810 aa)) forms a coiled coil. The tract at residues 837–863 (GGPGSRAVSVVREINSVSRGNRATSIM) is nonhelical region.

This sequence belongs to the paramyosin family. As to quaternary structure, homodimer.

Its subcellular location is the cytoplasm. The protein localises to the myofibril. Its function is as follows. Paramyosin is a major structural component of many thick filaments isolated from invertebrate muscles. This chain is Paramyosin, found in Echinococcus granulosus (Hydatid tapeworm).